Reading from the N-terminus, the 152-residue chain is uncharacterized protein (152 aa).

An N-linked (GlcNAc...) asparagine; by host glycan is attached at asparagine 2. The next 3 helical transmembrane spans lie at 5 to 25 (MILLMVIASFVAGYLSTMNLW), 36 to 56 (LNDFYMVLLMVGWMIVMCYIL), and 68 to 88 (LIITITIIIIIVYAIRTQAFI). An N-linked (GlcNAc...) asparagine; by host glycan is attached at asparagine 113.

It is found in the membrane. This is an uncharacterized protein from Acanthamoeba polyphaga mimivirus (APMV).